Consider the following 85-residue polypeptide: Toxin BmKaTx10 (85 aa).

The first 19 residues, 1–19, serve as a signal peptide directing secretion; sequence MNYLVMVSFALLLMTGVES. Positions 21-83 constitute an LCN-type CS-alpha/beta domain; that stretch reads RDGYIALPHN…VPIRVPGRCH (63 aa). Disulfide bonds link cysteine 31–cysteine 82, cysteine 35–cysteine 55, cysteine 41–cysteine 65, and cysteine 45–cysteine 67.

The protein belongs to the long (4 C-C) scorpion toxin superfamily. Sodium channel inhibitor family. Alpha subfamily. Expressed by the venom gland.

Its subcellular location is the secreted. In terms of biological role, alpha toxins bind voltage-independently at site-3 of sodium channels (Nav) and inhibit the inactivation of the activated channels, thereby blocking neuronal transmission. The polypeptide is Toxin BmKaTx10 (Olivierus martensii (Manchurian scorpion)).